Reading from the N-terminus, the 474-residue chain is 3-isopropylmalate dehydratase large subunit (474 aa).

Positions 353, 414, and 417 each coordinate [4Fe-4S] cluster.

This sequence belongs to the aconitase/IPM isomerase family. LeuC type 1 subfamily. As to quaternary structure, heterodimer of LeuC and LeuD. It depends on [4Fe-4S] cluster as a cofactor.

It carries out the reaction (2R,3S)-3-isopropylmalate = (2S)-2-isopropylmalate. Its pathway is amino-acid biosynthesis; L-leucine biosynthesis; L-leucine from 3-methyl-2-oxobutanoate: step 2/4. Catalyzes the isomerization between 2-isopropylmalate and 3-isopropylmalate, via the formation of 2-isopropylmaleate. This chain is 3-isopropylmalate dehydratase large subunit, found in Xylella fastidiosa (strain M12).